The sequence spans 359 residues: Probable E3 ubiquitin-protein ligase LUL4 (359 aa).

The segment at 1–35 (MGISFSNNNRRRDNNNRRHLHHYPPPPPYYYLDPP) is disordered. The N-myristoyl glycine moiety is linked to residue G2. The span at 23–35 (YPPPPPYYYLDPP) shows a compositional bias: pro residues. The segment at 148–267 (FVFDALFDGS…GSFKVKVVKQ (120 aa)) is DAR2 domain. Residues 302–341 (CVICMTEAKDTAVLPCRHLCMCSDCAKELRLQSNKCPICR) form an RING-type zinc finger.

It belongs to the RING-type zinc finger family. LOG2 subfamily.

It carries out the reaction S-ubiquitinyl-[E2 ubiquitin-conjugating enzyme]-L-cysteine + [acceptor protein]-L-lysine = [E2 ubiquitin-conjugating enzyme]-L-cysteine + N(6)-ubiquitinyl-[acceptor protein]-L-lysine.. The protein operates within protein modification; protein ubiquitination. Functionally, acts as an E3 ubiquitin-protein ligase, or as part of E3 complex, which accepts ubiquitin from specific E2 ubiquitin-conjugating enzymes and then transfers it to substrates (in vitro). The chain is Probable E3 ubiquitin-protein ligase LUL4 (LUL4) from Arabidopsis thaliana (Mouse-ear cress).